The sequence spans 912 residues: Glutamate receptor 3.2 (912 aa).

The first 22 residues, 1–22 (MFWVLVLLSFIVLIGDGMISEG), serve as a signal peptide directing secretion. The Extracellular portion of the chain corresponds to 23–587 (AGLRPRYVDV…TPWAFLRPFT (565 aa)). Asparagine 306, asparagine 338, asparagine 378, asparagine 417, asparagine 435, asparagine 445, and asparagine 532 each carry an N-linked (GlcNAc...) asparagine glycan. Glycine-binding positions include 544 to 546 (DIA) and arginine 551. L-methionine contacts are provided by residues 544 to 546 (DIA) and arginine 551. Residues 588–608 (PPMWAVTAAFFLIVGSVIWIL) traverse the membrane as a helical segment. The Cytoplasmic segment spans residues 609 to 617 (EHRINDEFR). Residues 618–638 (GPPRKQIVTILWFSFSTMFFS) traverse the membrane as a helical segment. The Cytoplasmic portion of the chain corresponds to 639–649 (HRENTVSTLGR). Residues 650-670 (AVLLIWLFVVLIITSSYTASL) traverse the membrane as a helical segment. Over 671–828 (TSILTVQQLN…EDSEQLKLRS (158 aa)) the chain is Extracellular. Tyrosine 703 lines the glycine pocket. Tyrosine 703 is an L-methionine binding site. Asparagine 734 is a glycosylation site (N-linked (GlcNAc...) asparagine). 743–746 (ERPY) is a glycine binding site. 743-746 (ERPY) contacts L-methionine. Cysteine 755 and cysteine 809 are joined by a disulfide. 2 N-linked (GlcNAc...) asparagine glycosylation sites follow: asparagine 808 and asparagine 813. Residues 829 to 849 (FWGLFLVCGISCFIALFIYFF) traverse the membrane as a helical segment. Residues 850–912 (KIVRDFFRHG…DLSLKPSRPI (63 aa)) lie on the Cytoplasmic side of the membrane. Positions 888-912 (KEDESKRRMKRKRNDDLSLKPSRPI) are disordered.

This sequence belongs to the glutamate-gated ion channel (TC 1.A.10.1) family. In terms of assembly, forms a heteromeric channel with GLR3.4. As to expression, expressed in leaves and siliques, and at lower level in flowers and roots. Detected in the vascular tissues of both shoots and roots. Expressed in root phloem.

Its subcellular location is the cell membrane. Its function is as follows. Glutamate-gated receptor that probably acts as a non-selective cation channel. May be involved in light-signal transduction and calcium homeostasis via the regulation of calcium influx into cells. Could play a role in calcium unloading from the xylem vessels. Acts as a negative regulator of lateral root initiation and development. May restrict primordia numbers and position along the root axis by a signaling process originating in the phloem. This is Glutamate receptor 3.2 from Arabidopsis thaliana (Mouse-ear cress).